The primary structure comprises 398 residues: MANAVVVLDNGAHTAKVGLANQDEPHVVPNCIMKAKSERRRAFVGNQIDECRDTSALYYILAFQRGYLLNWHTQKTVWDYIFSKDGIGCSLENRNIVITEPQMNFQSIQEATLEILFEEYKVDGVYKTTAADLAAFNYVADSEERTTMESLNCIIIDVGYSFTHVVPFVLGRRVLQGIRRIDMGGKALTNQLKELISYRHLNVMDESHVVNQIKEDVCFVAEDFKQAMQVHYSEEKRREVTVDYVLPDFTTVKRGYVRVPGKPREDEEQQQMVSLCNERFTVPELLFNPSDIGVQQVGIPEAVADCLKACPWEAHRELLLNILIVGGSAQFPGFLPRLKRDLRALVPDDLEVSLICPEDPVRYAWYGGKEVATSPNFEEFVYTQDDYEEYGFQGINQR.

It belongs to the actin family. ARP6 subfamily.

The protein resides in the nucleus. It localises to the nucleoplasm. It is found in the cytoplasm. The protein localises to the cytoskeleton. The polypeptide is Actin-related protein 6 (Arp6) (Drosophila melanogaster (Fruit fly)).